Here is a 195-residue protein sequence, read N- to C-terminus: ATP-dependent Clp protease proteolytic subunit 2 (195 aa).

The active-site Nucleophile is serine 98. Histidine 123 is a catalytic residue.

This sequence belongs to the peptidase S14 family. In terms of assembly, fourteen ClpP subunits assemble into 2 heptameric rings which stack back to back to give a disk-like structure with a central cavity, resembling the structure of eukaryotic proteasomes.

The protein localises to the cytoplasm. The catalysed reaction is Hydrolysis of proteins to small peptides in the presence of ATP and magnesium. alpha-casein is the usual test substrate. In the absence of ATP, only oligopeptides shorter than five residues are hydrolyzed (such as succinyl-Leu-Tyr-|-NHMec, and Leu-Tyr-Leu-|-Tyr-Trp, in which cleavage of the -Tyr-|-Leu- and -Tyr-|-Trp bonds also occurs).. Functionally, cleaves peptides in various proteins in a process that requires ATP hydrolysis. Has a chymotrypsin-like activity. Plays a major role in the degradation of misfolded proteins. ClpXP2 is involved in the complete degradation of the Site-2 clipped anti-sigma-W factor RsiW. This results in the release of SigW and the transcription activation of the genes under the control of the sigma-W factor. The protein is ATP-dependent Clp protease proteolytic subunit 2 of Shouchella clausii (strain KSM-K16) (Alkalihalobacillus clausii).